We begin with the raw amino-acid sequence, 418 residues long: Pentatricopeptide repeat-containing protein At2g18520, mitochondrial (418 aa).

The N-terminal 14 residues, 1–14 (MTSSRLYLRFLRRF), are a transit peptide targeting the mitochondrion. PPR repeat units follow at residues 101–135 (TETF…GTPR), 136–166 (TVVS…FPQR), 173–207 (DKIS…GVEV), 208–242 (TIIA…GCDL), 243–276 (DNTV…GLKP), 277–311 (DTVS…NAAT), 312–342 (FRTL…HKIP), and 343–373 (DFKT…VKKK).

Belongs to the PPR family. P subfamily.

Its subcellular location is the mitochondrion. The polypeptide is Pentatricopeptide repeat-containing protein At2g18520, mitochondrial (Arabidopsis thaliana (Mouse-ear cress)).